Reading from the N-terminus, the 199-residue chain is V-type proton ATPase subunit E (199 aa).

It belongs to the V-ATPase E subunit family.

Its function is as follows. Produces ATP from ADP in the presence of a proton gradient across the membrane. The protein is V-type proton ATPase subunit E of Clostridium botulinum (strain Okra / Type B1).